Consider the following 220-residue polypeptide: pH-response regulator palI/RIM9 homolog 1 (220 aa).

At 1 to 5 (MSHFK) the chain is on the cytoplasmic side. A helical membrane pass occupies residues 6-26 (IVFLTSLSLALVFELFNTISV). Residues 27–89 (PITSHLFISE…NHAKYALSKL (63 aa)) lie on the Extracellular side of the membrane. The helical transmembrane segment at 90–110 (LLVHVLSFVCVLVFWLFAILI) threads the bilayer. The Cytoplasmic portion of the chain corresponds to 111 to 121 (CIKWLNTSKSV). A helical transmembrane segment spans residues 122–142 (LLFAVGWSMVTFMVSLLGFLI). At 143-155 (DVLMFASHVTWSS) the chain is on the extracellular side. The chain crosses the membrane as a helical span at residues 156–176 (WLMLVSAFFVALSGILLCLMI). Topologically, residues 177 to 220 (RDLSYRRFVKLQGEVDVCVPMTEPRDPDELNEIWKKKTSKREIL) are cytoplasmic.

The protein belongs to the palI/RIM9 family.

The protein resides in the cell membrane. In terms of biological role, required for the proteolytic cleavage of the transcription factor RIM101 in response to alkaline ambient pH. This chain is pH-response regulator palI/RIM9 homolog 1, found in Kluyveromyces lactis (strain ATCC 8585 / CBS 2359 / DSM 70799 / NBRC 1267 / NRRL Y-1140 / WM37) (Yeast).